Here is a 315-residue protein sequence, read N- to C-terminus: Oxalate oxidoreductase subunit delta (315 aa).

4Fe-4S ferredoxin-type domains are found at residues glutamine 252 to glutamate 280 and glutamate 281 to glutamate 310. [4Fe-4S] cluster is bound by residues cysteine 261, cysteine 264, cysteine 267, cysteine 271, cysteine 290, cysteine 293, cysteine 296, and cysteine 300.

As to quaternary structure, dimer of heterotrimer of one alpha, one beta and one delta subunit. [4Fe-4S] cluster is required as a cofactor.

The catalysed reaction is oxidized 2[4Fe-4S]-[ferredoxin] + oxalate = reduced 2[4Fe-4S]-[ferredoxin] + 2 CO2. Its function is as follows. Catalyzes the anaerobic oxidation of oxalate using a broad range of electron acceptors, including ferredoxin and the nickel-dependent carbon monoxide dehydrogenase. Does not require coenzyme A as cosubstrate. Enables anaerobic growth on oxalate which is used as energy source by the bacteria. The protein is Oxalate oxidoreductase subunit delta of Moorella thermoacetica (strain ATCC 39073 / JCM 9320).